The chain runs to 782 residues: Ribosome biogenesis protein ERB1 (782 aa).

The span at 1-11 (MSVNSRKRKVA) shows a compositional bias: basic residues. Residues 1-120 (MSVNSRKRKV…LEGEEDESLK (120 aa)) form a disordered region. Composition is skewed to acidic residues over residues 39–51 (DESE…EDTD) and 59–75 (LSDE…DEAE). Positions 82–92 (RNLNTSGGSQQ) are enriched in polar residues. The span at 106–117 (GADGELEGEEDE) shows a compositional bias: acidic residues. WD repeat units lie at residues 432-471 (GQEG…QVWN) and 475-516 (SDEE…PDVE). A disordered region spans residues 533–556 (KPSTAANGEAPKQSPGKWSRPGSR). WD repeat units lie at residues 612–652 (RLKG…KILQ), 653–692 (PGAK…KPYK), 696–736 (FHKE…DLME), and 752–782 (KSRL…RLWN).

It belongs to the WD repeat BOP1/ERB1 family. In terms of assembly, component of the NOP7 complex, composed of ERB1, NOP7 and YTM1. The complex is held together by ERB1, which interacts with NOP7 via its N-terminal domain and with YTM1 via a high-affinity interaction between the seven-bladed beta-propeller domains of the 2 proteins. The NOP7 complex associates with the 66S pre-ribosome.

The protein resides in the nucleus. Its subcellular location is the nucleolus. It localises to the nucleoplasm. In terms of biological role, component of the NOP7 complex, which is required for maturation of the 25S and 5.8S ribosomal RNAs and formation of the 60S ribosome. This chain is Ribosome biogenesis protein ERB1, found in Phaeosphaeria nodorum (strain SN15 / ATCC MYA-4574 / FGSC 10173) (Glume blotch fungus).